A 79-amino-acid chain; its full sequence is UPF0154 protein SUB0399 (79 aa).

Residues 4-24 (AIWILLIVLALIGGLFGGVFI) form a helical membrane-spanning segment.

It belongs to the UPF0154 family.

The protein localises to the cell membrane. The chain is UPF0154 protein SUB0399 from Streptococcus uberis (strain ATCC BAA-854 / 0140J).